We begin with the raw amino-acid sequence, 247 residues long: Chymase (247 aa).

Residues methionine 1 to alanine 17 form the signal peptide. Positions lysine 18–glutamate 21 are cleaved as a propeptide — activation peptide. Residues valine 22–lysine 245 form the Peptidase S1 domain. A disulfide bridge connects residues cysteine 51 and cysteine 67. Catalysis depends on histidine 66, which acts as the Charge relay system. Residue asparagine 103 is glycosylated (N-linked (GlcNAc...) asparagine). Residue aspartate 110 is the Charge relay system of the active site. A glycan (N-linked (GlcNAc...) asparagine) is linked at asparagine 121. 2 disulfides stabilise this stretch: cysteine 144/cysteine 209 and cysteine 175/cysteine 188. The active-site Charge relay system is serine 203.

It belongs to the peptidase S1 family. Granzyme subfamily.

The protein localises to the secreted. It localises to the cytoplasmic granule. The enzyme catalyses Preferential cleavage: Phe-|-Xaa &gt; Tyr-|-Xaa &gt; Trp-|-Xaa &gt; Leu-|-Xaa.. In terms of biological role, major secreted protease of mast cells with suspected roles in vasoactive peptide generation, extracellular matrix degradation, and regulation of gland secretion. This chain is Chymase, found in Cavia porcellus (Guinea pig).